Consider the following 105-residue polypeptide: Large ribosomal subunit protein uL24 (105 aa).

This sequence belongs to the universal ribosomal protein uL24 family. As to quaternary structure, part of the 50S ribosomal subunit.

Functionally, one of two assembly initiator proteins, it binds directly to the 5'-end of the 23S rRNA, where it nucleates assembly of the 50S subunit. In terms of biological role, one of the proteins that surrounds the polypeptide exit tunnel on the outside of the subunit. This Psychrobacter arcticus (strain DSM 17307 / VKM B-2377 / 273-4) protein is Large ribosomal subunit protein uL24.